A 729-amino-acid chain; its full sequence is U-box domain-containing protein 17 (729 aa).

One can recognise a U-box domain in the interval 304–378 (TVPKDFVCPI…VQWCTASGIS (75 aa)). ARM repeat units follow at residues 438 to 477 (KENR…NLSI), 479 to 520 (EKNK…SLSA), 523 to 562 (EYKK…NLST), and 564 to 601 (PDNC…LLVR).

The enzyme catalyses S-ubiquitinyl-[E2 ubiquitin-conjugating enzyme]-L-cysteine + [acceptor protein]-L-lysine = [E2 ubiquitin-conjugating enzyme]-L-cysteine + N(6)-ubiquitinyl-[acceptor protein]-L-lysine.. It participates in protein modification; protein ubiquitination. In terms of biological role, functions as an E3 ubiquitin ligase. This chain is U-box domain-containing protein 17 (PUB17), found in Arabidopsis thaliana (Mouse-ear cress).